Consider the following 411-residue polypeptide: Serine hydroxymethyltransferase (411 aa).

(6S)-5,6,7,8-tetrahydrofolate contacts are provided by residues leucine 119 and 123 to 125 (GHL). Lysine 228 bears the N6-(pyridoxal phosphate)lysine mark.

The protein belongs to the SHMT family. As to quaternary structure, homodimer. Pyridoxal 5'-phosphate is required as a cofactor.

It is found in the cytoplasm. The catalysed reaction is (6R)-5,10-methylene-5,6,7,8-tetrahydrofolate + glycine + H2O = (6S)-5,6,7,8-tetrahydrofolate + L-serine. It functions in the pathway one-carbon metabolism; tetrahydrofolate interconversion. Its pathway is amino-acid biosynthesis; glycine biosynthesis; glycine from L-serine: step 1/1. Catalyzes the reversible interconversion of serine and glycine with tetrahydrofolate (THF) serving as the one-carbon carrier. This reaction serves as the major source of one-carbon groups required for the biosynthesis of purines, thymidylate, methionine, and other important biomolecules. Also exhibits THF-independent aldolase activity toward beta-hydroxyamino acids, producing glycine and aldehydes, via a retro-aldol mechanism. This Clostridium kluyveri (strain NBRC 12016) protein is Serine hydroxymethyltransferase.